Consider the following 314-residue polypeptide: Phosphoribosylaminoimidazole-succinocarboxamide synthase (314 aa).

Belongs to the SAICAR synthetase family.

The catalysed reaction is 5-amino-1-(5-phospho-D-ribosyl)imidazole-4-carboxylate + L-aspartate + ATP = (2S)-2-[5-amino-1-(5-phospho-beta-D-ribosyl)imidazole-4-carboxamido]succinate + ADP + phosphate + 2 H(+). The protein operates within purine metabolism; IMP biosynthesis via de novo pathway; 5-amino-1-(5-phospho-D-ribosyl)imidazole-4-carboxamide from 5-amino-1-(5-phospho-D-ribosyl)imidazole-4-carboxylate: step 1/2. In Bacteroides thetaiotaomicron (strain ATCC 29148 / DSM 2079 / JCM 5827 / CCUG 10774 / NCTC 10582 / VPI-5482 / E50), this protein is Phosphoribosylaminoimidazole-succinocarboxamide synthase.